A 179-amino-acid chain; its full sequence is Bifunctional protein PyrR (179 aa).

The PRPP-binding signature appears at 100-112 (VILVDDVLFTGRT).

It belongs to the purine/pyrimidine phosphoribosyltransferase family. PyrR subfamily. Homodimer and homohexamer; in equilibrium.

It catalyses the reaction UMP + diphosphate = 5-phospho-alpha-D-ribose 1-diphosphate + uracil. Its function is as follows. Regulates transcriptional attenuation of the pyrimidine nucleotide (pyr) operon by binding in a uridine-dependent manner to specific sites on pyr mRNA. This disrupts an antiterminator hairpin in the RNA and favors formation of a downstream transcription terminator, leading to a reduced expression of downstream genes. Also displays a weak uracil phosphoribosyltransferase activity which is not physiologically significant. The sequence is that of Bifunctional protein PyrR from Geobacillus thermodenitrificans (strain NG80-2).